Reading from the N-terminus, the 494-residue chain is 2,3-bisphosphoglycerate-independent phosphoglycerate mutase (494 aa).

Mn(2+)-binding residues include D12 and S62. S62 serves as the catalytic Phosphoserine intermediate. Substrate is bound by residues H121, 150 to 151 (RD), R181, R187, 252 to 255 (RSDR), and K317. Residues D384, H388, D425, H426, and H443 each contribute to the Mn(2+) site.

It belongs to the BPG-independent phosphoglycerate mutase family. Monomer. The cofactor is Mn(2+).

It carries out the reaction (2R)-2-phosphoglycerate = (2R)-3-phosphoglycerate. Its pathway is carbohydrate degradation; glycolysis; pyruvate from D-glyceraldehyde 3-phosphate: step 3/5. Its function is as follows. Catalyzes the interconversion of 2-phosphoglycerate and 3-phosphoglycerate. In Anaplasma marginale (strain St. Maries), this protein is 2,3-bisphosphoglycerate-independent phosphoglycerate mutase.